A 245-amino-acid polypeptide reads, in one-letter code: 2,3-bisphosphoglycerate-dependent phosphoglycerate mutase (245 aa).

Substrate-binding positions include 8–15, 21–22, Arg-60, 87–90, Lys-98, 114–115, and 183–184; these read RHGQSLWN, TG, ERHY, RR, and GN. His-9 (tele-phosphohistidine intermediate) is an active-site residue. Glu-87 serves as the catalytic Proton donor/acceptor.

Belongs to the phosphoglycerate mutase family. BPG-dependent PGAM subfamily.

The catalysed reaction is (2R)-2-phosphoglycerate = (2R)-3-phosphoglycerate. It participates in carbohydrate degradation; glycolysis; pyruvate from D-glyceraldehyde 3-phosphate: step 3/5. Functionally, catalyzes the interconversion of 2-phosphoglycerate and 3-phosphoglycerate. In Bacillus thuringiensis subsp. konkukian (strain 97-27), this protein is 2,3-bisphosphoglycerate-dependent phosphoglycerate mutase.